Here is a 159-residue protein sequence, read N- to C-terminus: Urease subunit beta 2 (159 aa).

Residues 1-23 (MAKEPTEAAHPQPEQTKTNHKAH) form a disordered region.

The protein belongs to the urease beta subunit family. In terms of assembly, heterotrimer of UreA (gamma), UreB (beta) and UreC (alpha) subunits. Three heterotrimers associate to form the active enzyme.

Its subcellular location is the cytoplasm. It carries out the reaction urea + 2 H2O + H(+) = hydrogencarbonate + 2 NH4(+). It functions in the pathway nitrogen metabolism; urea degradation; CO(2) and NH(3) from urea (urease route): step 1/1. The sequence is that of Urease subunit beta 2 from Brucella abortus biovar 1 (strain 9-941).